An 88-amino-acid chain; its full sequence is uncharacterized protein (88 aa).

This is an uncharacterized protein from Archaeoglobus fulgidus (strain ATCC 49558 / DSM 4304 / JCM 9628 / NBRC 100126 / VC-16).